The primary structure comprises 74 residues: Veswaprin-a (74 aa).

The N-terminal stretch at 1–24 is a signal peptide; that stretch reads MSSGGLLLLLGLLTLWAEVTPISG. A WAP domain is found at 27 to 71; that stretch reads RPKKPGLCPPRPQKPCVKECKNDWSCPGQQKCCNYGCIDECRDPI. 4 cysteine pairs are disulfide-bonded: C34–C59, C42–C63, C46–C58, and C52–C67.

It belongs to the venom waprin family. In terms of tissue distribution, expressed by the venom gland.

The protein localises to the secreted. Its function is as follows. Damages membranes of susceptible bacteria. Has no hemolytic activity. Not toxic to mice. Does not inhibit the proteinases elastase and cathepsin G. This Demansia vestigiata (Lesser black whip snake) protein is Veswaprin-a.